We begin with the raw amino-acid sequence, 254 residues long: Phosphoribosylaminoimidazole-succinocarboxamide synthase (254 aa).

The protein belongs to the SAICAR synthetase family.

It carries out the reaction 5-amino-1-(5-phospho-D-ribosyl)imidazole-4-carboxylate + L-aspartate + ATP = (2S)-2-[5-amino-1-(5-phospho-beta-D-ribosyl)imidazole-4-carboxamido]succinate + ADP + phosphate + 2 H(+). It functions in the pathway purine metabolism; IMP biosynthesis via de novo pathway; 5-amino-1-(5-phospho-D-ribosyl)imidazole-4-carboxamide from 5-amino-1-(5-phospho-D-ribosyl)imidazole-4-carboxylate: step 1/2. The chain is Phosphoribosylaminoimidazole-succinocarboxamide synthase from Rhodospirillum centenum (strain ATCC 51521 / SW).